A 298-amino-acid chain; its full sequence is Zinc-alpha-2-glycoprotein (298 aa).

The first 20 residues, 1–20 (MVRMVPVLLSLLLLLGPAVP), serve as a signal peptide directing secretion. At Q21 the chain carries Pyrrolidone carboxylic acid. The N-linked (GlcNAc...) (complex) asparagine glycan is linked to N109. N-linked (GlcNAc...) asparagine glycosylation is present at N112. 2 cysteine pairs are disulfide-bonded: C123/C186 and C225/C280. N-linked (GlcNAc...) (complex) asparagine glycosylation is present at N128. The Ig-like C1-type domain occupies 207 to 292 (PSVVVTSHQA…QHSSLAQPLV (86 aa)). N-linked (GlcNAc...) asparagine glycosylation is present at N259.

Belongs to the MHC class I family. Interacts with PIP. In terms of processing, N-glycosylated. N-glycan at Asn-128: Hex5HexNAc4. In terms of tissue distribution, blood plasma, seminal plasma, urine, saliva, sweat, epithelial cells of various human glands, liver.

It localises to the secreted. Stimulates lipid degradation in adipocytes and causes the extensive fat losses associated with some advanced cancers. May bind polyunsaturated fatty acids. The polypeptide is Zinc-alpha-2-glycoprotein (AZGP1) (Homo sapiens (Human)).